The primary structure comprises 339 residues: MKINIDEKLETTEILIETQDDLWYIKNILNPGDIIEGIAYRRLEKRNDLERSKSTERIPIKVKIKIENLDFQPFTDKIKILGIIIDGDFSGEHQSIMYGPGDTLKIYKNLNEAERDFLNEAVKNEYSSGMIFVSLDEEAADIYLMRSYSLQDMAHIESNKTGKRYDLKYNEKQYFLDIIKALKNIKNVFLLIVLGTGFEPEKLYNEIKKDPFFNNIDVKFYNTYDTGKSGVYNLLNSDATSNIIKESRMAKEKRILETFLRNLNSGLSVYGYDEINNYLDNGAIDTLIISEEKFKMPETRELLNKASGIKIYIISNYTEPGEIIRSFGGYCAILRYKIK.

This sequence belongs to the eukaryotic release factor 1 family. Pelota subfamily. Monomer. It depends on a divalent metal cation as a cofactor.

The protein localises to the cytoplasm. May function in recognizing stalled ribosomes, interact with stem-loop structures in stalled mRNA molecules, and effect endonucleolytic cleavage of the mRNA. May play a role in the release non-functional ribosomes and degradation of damaged mRNAs. Has endoribonuclease activity. In Picrophilus torridus (strain ATCC 700027 / DSM 9790 / JCM 10055 / NBRC 100828 / KAW 2/3), this protein is Protein pelota homolog.